Here is a 3672-residue protein sequence, read N- to C-terminus: MSPYDSSPWATKALFLIVTLLAQFTYSQVLTPSQITISHRKPITATSTCGEIQGQPVTEIYCSLTGSTQYTPLNSYSYQDDEQQKSWSQYENPMVRGGHGCGHCNAGNENSHPAANMVDGNNSWWMSPPLSRGLQHNEVNITIDLEQEFHVAYVWIQMANSPRPGSWVLERSTDHGKTYQPWFNFAENAAECMRRFGMESLSPISEDDSVTCRTDMASLQPLENAEMVIRILEHRPSSRQFATSEALQNFTRATNVRLRLLGTRTLQGHLMDMNEWRDPTVTRRYFYAIKEIMIGGRCVCNGHAVTCDILEPQRPKSLLCRCEHNTCGDMCERCCPGFVQKQWQAATAHNNFTCEACNCFGRSNECEYDAEVDLNKQSIDSQGNYEGGGVCKNCRENTEGVNCNKCSFGYFRPEGVTWNEPQPCKVCDCDPDKHTGACAEETGKCECLPRFVGEDCDQCASGYYDAPKCKPCECNVNGTIGDVCLPEDGQCPCKAGFGGTFCETCADGYTNVTAGCVECVCDATGSEHGNCSASTGQCECKPAYAGLSCDKCQVGYFGDDCKFCNCDPMGTEGGVCDQTTGQCLCKEGFAGDKCDRCDIAFYGYPNCKACACDGAGITSPECDATSGQCPCNGNFTGRTCDKCAAGFYNYPDCRGCECLLSGAKGQTCDSNGQCYCKGNFEGERCDRCKPNFYNFPICEECNCNPSGVTRDFQGCDKVSPGELCSCRKHVTGRICDQCKPTFWDLQYHHEDGCRSCDCNVNGTISGLNTCDLKTGQCMCKKNADGRRCDQCADGFYRLNSYNQMGCESCHCDIGGALRAECDITSGQCKCRPRVTGLRCDQPIENHYFPTLWHNQYEAEDAHTEDQKPVRFAVDPEQFADFSWRGYAVFSPIQDKILIDVDITKATVYRLLFRYRNPTSVPVTATVTINPRFTHTHDVEQTGKATFAPGDLPAMKEITVDGKPFVLNPGKWSLAISTKQRLFLDYVVVLPAEYYEGTVLRQRAPQPCLSHSTKNTTCVDLIYPPIPSVSRQFVDMDKVPFNYINEDGTTTALEHVPVEILLSEITGPAAFVRADENPRVVEAKLDVPETGEYVIVLEYHNREETDGNIGVGISQNDKEVLNGNAVIHHCPYATFCRELVSSEGTIPYIPLEKGEATVRLNIKPNHEFGLAGVQLIKKSDFSSEYLQQVPVCIKKDARCVQQSYPPAADSVTTEAESGSNMDKSILGDKLPFPVSNSKEMRVVPLDDAQATVEISGVVPTRGHYMFMVHYFNPDNTPINIDVLIQNEHYFQGDSCNSFACSSVPLAFCPSISGCRALIRDKERPEVIQFYMDDKYTATFYHNSSQKGPIYIDSITAVPYNSYKDKLMEPLALDLSNEFLKECSEDNLKNHPESVSDFCKQKIFSLTTDFNAAALSCDCVAQGSESFQCEQYGGQCKCKPGVIGRRCERCAPGYYNFPECIKCQCNAGQQCDERTGQCFCPPHVEGQTCDRCVSNAFGYDPLIGCQKCGCHPQGSEGGNLVCDPESGQCLCRESMGGRQCDRCLAGFYGFPHCYGCSCNRAGTTEEICDATNAQCKCKENVYGGRCEACKAGTFDLSAENPLGCVNCFCFGVTDSCRSSMYPVTIMSVDMSSFLTTDDNGMVDNKDDTVIYTSEETSPNSVYFNVPIEKKDYTTSYGLKLTFKLSTVPRGGRKSMNADADVRLTGANMTIEYWASEQPTNPEEQFTVKCKLVPENFLTAEGKTVTREELMKVLHSLQNITLKASYFDHPKTSTLYEFGLEISEPNGVDSVIKASSVEQCQCPAPYTGPSCQLCASGYHRVQSGSFLGACVPCECNGHSATCDPDTGICTDCEHNTNGDHCEFCNEGHYGNATNGSPYDCMACACPFAPTNNFAKSCDVSEEGQLLQCNCKPGYTGDRCDRCASGFFGHPQISGESCSPCQCNGNNNLTDSRSCHPNSGDCYLCEQNTDGRHCESCAAWFYGDAVTAKNCSSCECSQCGSQYCDNKSGGCECKINVEGDSCDRCKPDHWGFSKCQGCQGCHCGTAAFNTQCNVENGQCTCRPGATGMRCEHCEHGYWNYGEHGCDKCDCEADLSMGTVCDVRTGQCHCQEGATGSRCDQCLPSYLRIPTYGCRRCDECVHHLIGDVDNLELEIDVLGTAIANISSATIVGARLARNKKEFNDINEITKMLNDEENSFGNVFGDAQDILTNSTQIQNKLVRTKTHSQNSVSSAKNITLNGTEFLQEVMKRAQRARQSVRSLAEIALAIGSSSKAVNVDPRLLKEAEETLMTLEAASADQYPEKAQTVPGKLEEIQKKIQEETEKLDKQKETFEAQKKRAEELAAYLNSAQQLLKESKSKADKSNNIAKMLQLTKVENLVAAITDDLERVEAAKGEFQKLNVAIGNITENLKDKREEMTHAVTTLNETRNDVAEALEAAKKRVRRDEKSVDMQLVNAKAHELHLQATTLRQTFDNNKDNTDQAVEAANAFSNLTDTLKNAKAQIDNAYEALSAEPAFAESVQNARDKPFPDETKEKIDALSKTVSQDLKETEKLKKQLEQLTELSEKLRKRKEAVKAGIPKYSKNTLDSIDEKVQEVEKLKAEIDANIEETRAKISEIAGKAEEITEKANSAMEGIRLARRNSVQLNKLAPVIVSKFEELKKLSSARSAKVDSVSDKVSQIKEMIAVARDAANRIKLGAHFEKGSSLDLNIPQRVTRSAAHADISFYFRTEQEHGIPLFFGNEETAVGSRAVPTADYVAAEIEYGRPKITVDLGDAPAVVKLDTPVNDGLWRRLNIERIGKTVSVTLSKPNSVETAETKSSVAGGNKSVLNLNQQISRLFVGGVPTSARISKDLYNRDFVGDIESLKLHGEPIGLWNSREKGNTNVNGAQKKPKITDNADELVVSLDGEGYTSYKPSHWNPRKATKISLSFLTFSPHGLLFFVGKDKDFMALELSDGGVKLSVDLGSGVGQWITESSNYNDGKWHTVSIVREEKHVKIMIDGETEVLEGDVPGKDSEMSVTEFLYIGGTPSGLSVRTTIVPLRGCIKSVKLGSDNVDLESSHASKGVRSGCPLHSVRTVSFLSDRTTASFNNATEFSEDVSVTFKFKTRSIRQPSSLFTVNDDEDSVLSVSINEDGILTVTSGEDIATLELAASPDEKWHYVSIRKTKYIIRIDADDSFSNEVARKHADDSNPDASFLSAFFGKSGETPSFVGCIGDVTLNGKLLDFANSEIKEISLNGCSLSDDENISTTTTAAPKPTDDSDVAVLPIDEEEESTTTTTTTTTEEPTEEPAEARPDGHCSLPEDPMVQFEDAEGFNFGSQQYSRIEYDILPEAIDKSGEFTFKIRPTSDNGIIFIATNKRTDHIAVMLEHGRVVFTYDTGSGQVIIKSDKSIIDGRWHTIKVSRRGKSAHLIVDDNSYESEGAANQNEDLIETQPPFYVGGVPADLAGFARNLVVGVRSQFSGCIKDFKLNGKSLDNGKEFGTEQCSQFSEPGMYFGKDGGYAIVQKDYEVGLTFGLEVEMRPRMKNGILFSVGVLEYITVEFVNGSIKTTVESGSGGEELWHHPDIENQYCDGQWQSFKISKKRNLLTVAVNGKAHLKILKKAKTDVLTKDPLYFGGLPEGVTNKGIKTNKPFVGCIRFVSFGLKKDRKIRRKKQVDTERFDVFGDVHRNACPAI.

The signal sequence occupies residues Met1–Ser27. Residues Gln28–Arg297 enclose the Laminin N-terminal domain. N-linked (GlcNAc...) asparagine glycans are attached at residues Asn121, Asn140, and Asn249. Disulfide bonds link Cys298-Cys307, Cys300-Cys320, Cys322-Cys331, Cys334-Cys354, Cys357-Cys366, Cys359-Cys391, Cys394-Cys403, Cys406-Cys424, Cys427-Cys438, Cys429-Cys445, Cys447-Cys456, Cys459-Cys469, Cys472-Cys484, Cys474-Cys491, Cys493-Cys502, Cys505-Cys516, Cys519-Cys531, Cys521-Cys538, Cys540-Cys549, Cys552-Cys561, Cys564-Cys576, Cys566-Cys583, Cys585-Cys594, Cys597-Cys607, Cys610-Cys622, Cys612-Cys629, Cys631-Cys640, Cys643-Cys653, Cys656-Cys668, Cys658-Cys674, Cys676-Cys685, Cys688-Cys698, Cys701-Cys715, Cys703-Cys724, Cys726-Cys735, Cys738-Cys753, Cys756-Cys770, Cys758-Cys777, Cys779-Cys788, Cys791-Cys806, Cys809-Cys821, Cys811-Cys828, and Cys830-Cys839. Laminin EGF-like domains follow at residues Cys298 to Ala356, Cys357 to Val426, Cys427 to Pro471, Cys472 to Glu518, Cys519 to Phe563, Cys564 to Ala609, Cys610 to Gly655, Cys656 to Glu700, Cys701 to Ser755, and Cys756 to Ser808. N-linked (GlcNAc...) asparagine glycosylation occurs at Asn351. Asn477 is a glycosylation site (N-linked (GlcNAc...) asparagine). N-linked (GlcNAc...) asparagine glycosylation is found at Asn511 and Asn530. Asn634 carries an N-linked (GlcNAc...) asparagine glycan. Asn761 is a glycosylation site (N-linked (GlcNAc...) asparagine). One can recognise a Laminin EGF-like 11; truncated domain in the interval Cys809 to Cys839. Asn1014 and Asn1341 each carry an N-linked (GlcNAc...) asparagine glycan. Disulfide bonds link Cys1415–Cys1427, Cys1417–Cys1434, Cys1436–Cys1445, Cys1448–Cys1458, Cys1461–Cys1469, Cys1463–Cys1476, Cys1478–Cys1487, Cys1490–Cys1503, Cys1506–Cys1520, Cys1508–Cys1527, Cys1529–Cys1538, Cys1541–Cys1551, Cys1554–Cys1566, Cys1556–Cys1573, Cys1575–Cys1584, and Cys1587–Cys1602. 4 Laminin EGF-like domains span residues Cys1415–Lys1460, Cys1461–Lys1505, Cys1506–Gly1553, and Cys1554–Asn1604. Residues Cys1605–Cys1614 enclose the Laminin EGF-like 16; first part domain. Residues Arg1615–Gln1796 enclose the Laminin IV type A domain. N-linked (GlcNAc...) asparagine glycans are attached at residues Asn1705 and Asn1756. The 33-residue stretch at Cys1797–Pro1829 folds into the Laminin EGF-like 16; second part domain. Intrachain disulfides connect Cys1830/Cys1839, Cys1832/Cys1846, Cys1849/Cys1858, Cys1861/Cys1877, Cys1880/Cys1894, Cys1882/Cys1905, Cys1907/Cys1916, Cys1919/Cys1934, Cys1937/Cys1951, Cys1939/Cys1958, Cys1961/Cys1970, Cys1973/Cys1987, Cys1990/Cys2000, Cys1992/Cys2007, Cys2009/Cys2018, Cys2021/Cys2031, Cys2037/Cys2048, Cys2039/Cys2055, Cys2057/Cys2066, Cys2069/Cys2081, Cys2084/Cys2096, Cys2086/Cys2103, Cys2105/Cys2114, and Cys2117/Cys2129. Laminin EGF-like domains follow at residues Cys1830 to Ala1879, Cys1880 to Pro1936, Cys1937 to Ser1989, Cys1990 to Gly2036, Cys2037 to Lys2083, and Cys2084 to Arg2131. N-linked (GlcNAc...) asparagine glycosylation is present at Asn1868. Asn1944 carries N-linked (GlcNAc...) asparagine glycosylation. N-linked (GlcNAc...) asparagine glycosylation occurs at Asn1986. A glycan (N-linked (GlcNAc...) asparagine) is linked at Asn2002. N-linked (GlcNAc...) asparagine glycans are attached at residues Asn2159, Asn2207, Asn2231, Asn2235, Asn2401, Asn2421, Asn2487, and Asn2821. Laminin G-like domains are found at residues Gly2693–Ala2884, Glu2896–Cys3066, and Arg3072–Cys3235. An intrachain disulfide couples Cys3040 to Cys3066. Asn3087 carries N-linked (GlcNAc...) asparagine glycosylation. Cys3209 and Cys3235 are disulfide-bonded. Positions Ser3236–His3294 are disordered. The N-linked (GlcNAc...) asparagine glycan is linked to Asn3242. The segment covering Thr3271 to Glu3280 has biased composition (low complexity). Laminin G-like domains follow at residues Gly3310 to Cys3482 and Pro3488 to Cys3669. Cys3460 and Cys3482 are joined by a disulfide. Asn3541 carries N-linked (GlcNAc...) asparagine glycosylation. Cys3633 and Cys3669 form a disulfide bridge.

As to quaternary structure, laminin is a complex glycoprotein, consisting of three different polypeptide chains (alpha, beta, gamma), which are bound to each other by disulfide bonds into a cross-shaped molecule comprising one long and three short arms with globules at each end.

The protein localises to the secreted. It localises to the extracellular space. Its subcellular location is the extracellular matrix. The protein resides in the basement membrane. Its function is as follows. Binding to cells via a high affinity receptor, laminin is thought to mediate the attachment, migration and organization of cells into tissues during embryonic development by interacting with other extracellular matrix components. Required to assemble a stable basement membrane and for organizing receptor complexes and cytoskeletal components to the proper cell surfaces. During embryogenesis, does not require the presence of collagen type IV in order to associate with cell surfaces, prior to assembly of the prototypical basement membrane. During the formation of neuromuscular junctions at the larval stage, negatively regulates membrane protrusion from body wall muscles, probably downstream of the integrin complex formed by pat-2 and pat-3. Probably plays a distinct role from the related laminin subunit alpha lam-3. The polypeptide is Laminin-like protein epi-1 (epi-1) (Caenorhabditis elegans).